Consider the following 488-residue polypeptide: Probable malate:quinone oxidoreductase (488 aa).

It belongs to the MQO family. FAD serves as cofactor.

The catalysed reaction is (S)-malate + a quinone = a quinol + oxaloacetate. Its pathway is carbohydrate metabolism; tricarboxylic acid cycle; oxaloacetate from (S)-malate (quinone route): step 1/1. The chain is Probable malate:quinone oxidoreductase from Neisseria gonorrhoeae (strain ATCC 700825 / FA 1090).